A 230-amino-acid chain; its full sequence is Sugar fermentation stimulation protein homolog (230 aa).

The protein belongs to the SfsA family.

The chain is Sugar fermentation stimulation protein homolog from Clostridium perfringens (strain ATCC 13124 / DSM 756 / JCM 1290 / NCIMB 6125 / NCTC 8237 / Type A).